A 273-amino-acid chain; its full sequence is Large ribosomal subunit protein uL2cz/uL2cy (273 aa).

Disordered stretches follow at residues 1–20 (MAKHLYKTPIPSTRKGTIDR) and 225–273 (PVDH…RRRK).

Belongs to the universal ribosomal protein uL2 family. In terms of assembly, part of the 50S ribosomal subunit.

Its subcellular location is the plastid. The protein resides in the chloroplast. This chain is Large ribosomal subunit protein uL2cz/uL2cy (rpl2-A), found in Oryza nivara (Indian wild rice).